The following is a 760-amino-acid chain: Anti-sigma-I factor RsgI6 (760 aa).

Residues 1–55 (MIVGKVLDMDEKTAIIMTDDFAFLNVVRTSEMAVGKKVKVLDSDIIKPKNSLRRY) lie on the Cytoplasmic side of the membrane. The 48-residue stretch at 2–49 (IVGKVLDMDEKTAIIMTDDFAFLNVVRTSEMAVGKKVKVLDSDIIKPK) folds into the RsgI N-terminal anti-sigma domain. A helical transmembrane segment spans residues 56 to 76 (LPVAAVAACFVIVLSFVLMFI). At 77–760 (NGNTARKNIY…GTLQTTYRIP (684 aa)) the chain is on the extracellular side. A disordered region spans residues 274 to 352 (AINTGPAESA…STPKPVSPVQ (79 aa)). Polar residues predominate over residues 291 to 352 (LPATSTPGRT…STPKPVSPVQ (62 aa)). In terms of domain architecture, GH10 spans 402-701 (DSSNKPIENA…NEAGRRFESL (300 aa)). E538 serves as the catalytic Proton donor. E635 acts as the Nucleophile in catalysis.

The protein in the C-terminal section; belongs to the glycosyl hydrolase 10 (cellulase F) family. Interacts (via RsgI N-terminal anti-sigma domain) with SigI6.

The protein localises to the cell membrane. The enzyme catalyses Endohydrolysis of (1-&gt;4)-beta-D-xylosidic linkages in xylans.. Its pathway is glycan degradation; xylan degradation. Functionally, anti-sigma factor for SigI6. Negatively regulates SigI6 activity through direct interaction. Binding of the polysaccharide substrate to the extracellular C-terminal sensing domain of RsgI6 may induce a conformational change in its N-terminal cytoplasmic region, leading to the release and activation of SigI6. Binds to and hydrolyzes insoluble and soluble xylan substrates. Has low enzymatic activity. The protein is Anti-sigma-I factor RsgI6 of Acetivibrio thermocellus (strain ATCC 27405 / DSM 1237 / JCM 9322 / NBRC 103400 / NCIMB 10682 / NRRL B-4536 / VPI 7372) (Clostridium thermocellum).